The primary structure comprises 225 residues: Large ribosomal subunit protein mL58 (225 aa).

The disordered stretch occupies residues 106 to 138 (PQAPITTPESSSTDAAAADQHGDLPPVLYNPTK). The span at 109–119 (PITTPESSSTD) shows a compositional bias: polar residues.

The protein belongs to the mitochondrion-specific ribosomal protein mL58 family. In terms of assembly, component of the mitochondrial large ribosomal subunit (mt-LSU). Mature N.crassa 74S mitochondrial ribosomes consist of a small (37S) and a large (54S) subunit. The 37S small subunit contains a 16S ribosomal RNA (16S mt-rRNA) and 32 different proteins. The 54S large subunit contains a 23S rRNA (23S mt-rRNA) and 42 different proteins.

The protein resides in the mitochondrion. Component of the mitochondrial ribosome (mitoribosome), a dedicated translation machinery responsible for the synthesis of mitochondrial genome-encoded proteins, including at least some of the essential transmembrane subunits of the mitochondrial respiratory chain. The mitoribosomes are attached to the mitochondrial inner membrane and translation products are cotranslationally integrated into the membrane. The sequence is that of Large ribosomal subunit protein mL58 (mrpl20) from Neurospora crassa (strain ATCC 24698 / 74-OR23-1A / CBS 708.71 / DSM 1257 / FGSC 987).